The chain runs to 216 residues: Vesicle-associated membrane protein 7A (216 aa).

Topologically, residues 1–189 (MSQTDILYAC…KRKLWWQNKK (189 aa)) are cytoplasmic. Residues 6–112 (ILYACVSYKG…ATYDPFIRVL (107 aa)) form the Longin domain. A v-SNARE coiled-coil homology domain is found at 126 to 186 (KMNLVMDQVS…VALKRKLWWQ (61 aa)). A helical; Anchor for type IV membrane protein transmembrane segment spans residues 190-210 (LAIAIGLVVCILIAVITLALL). The Vesicular segment spans residues 211–216 (KYFKVI).

This sequence belongs to the synaptobrevin family. As to quaternary structure, component of the SNARE complex composed of syn7A, syn8A, vamp7A and vti1A.

Its subcellular location is the cytoplasmic vesicle. It is found in the secretory vesicle membrane. The protein resides in the golgi apparatus. It localises to the trans-Golgi network membrane. The protein localises to the late endosome membrane. Its subcellular location is the lysosome membrane. It is found in the endoplasmic reticulum membrane. The protein resides in the phagosome membrane. Functionally, involved in the targeting and/or fusion of transport vesicles to their target membrane during transport of proteins from the early endosome to the lysosome. Required for heterotypic fusion of late endosomes with lysosomes and homotypic lysosomal fusion. Required for calcium regulated lysosomal exocytosis. This Dictyostelium discoideum (Social amoeba) protein is Vesicle-associated membrane protein 7A.